Reading from the N-terminus, the 495-residue chain is AAA-ATPase At2g18193 (495 aa).

Residues 7-28 (FSFSPSSLFSAYASLTGFLMLF) traverse the membrane as a helical segment. 250 to 257 (GPPGTGKS) is an ATP binding site. A disordered region spans residues 451 to 495 (EVSICKATDDDEKQNGSLGCVKKKKKGGKQKGKGKGKGKAKTYLI). Positions 471 to 495 (VKKKKKGGKQKGKGKGKGKAKTYLI) are enriched in basic residues.

Belongs to the AAA ATPase family. BCS1 subfamily. Mg(2+) is required as a cofactor.

The protein localises to the membrane. The catalysed reaction is ATP + H2O = ADP + phosphate + H(+). The protein is AAA-ATPase At2g18193 of Arabidopsis thaliana (Mouse-ear cress).